The sequence spans 265 residues: Octanoyltransferase (265 aa).

The BPL/LPL catalytic domain maps to 35-254 (DEVPDTVLLL…HLRDVLENAE (220 aa)). Substrate is bound by residues 73-80 (RGGKITWH), 184-186 (AIG), and 197-199 (GFA). Cys215 acts as the Acyl-thioester intermediate in catalysis.

Belongs to the LipB family.

Its subcellular location is the cytoplasm. The enzyme catalyses octanoyl-[ACP] + L-lysyl-[protein] = N(6)-octanoyl-L-lysyl-[protein] + holo-[ACP] + H(+). Its pathway is protein modification; protein lipoylation via endogenous pathway; protein N(6)-(lipoyl)lysine from octanoyl-[acyl-carrier-protein]: step 1/2. Catalyzes the transfer of endogenously produced octanoic acid from octanoyl-acyl-carrier-protein onto the lipoyl domains of lipoate-dependent enzymes. Lipoyl-ACP can also act as a substrate although octanoyl-ACP is likely to be the physiological substrate. The polypeptide is Octanoyltransferase (Streptomyces coelicolor (strain ATCC BAA-471 / A3(2) / M145)).